Reading from the N-terminus, the 150-residue chain is Arginine repressor (150 aa).

Belongs to the ArgR family.

It is found in the cytoplasm. It functions in the pathway amino-acid biosynthesis; L-arginine biosynthesis [regulation]. In terms of biological role, regulates arginine biosynthesis genes. The polypeptide is Arginine repressor (Staphylococcus haemolyticus (strain JCSC1435)).